We begin with the raw amino-acid sequence, 579 residues long: Capsid vertex component 2 (579 aa).

An interaction with major capsid protein/MCP region spans residues 1 to 50 (MTARYGFGSISFPNKCGIFLSTTKNFIAPNFPIHYWTAPAFELRGRMNPD).

The protein belongs to the herpesviridae CVC2 protein family. Heterodimerizes with CVC1. Interacts with major capsid protein/MCP and triplex capsid protein 1/TRX1 at the pentamer vertices. Interacts with the large tegument protein/LTP.

It localises to the virion. The protein localises to the host nucleus. Its function is as follows. Capsid vertex-specific component that plays a role during viral DNA encapsidation, assuring correct genome cleavage and presumably stabilizing capsids that contain full-length viral genomes. Participates in the interaction between the capsid and the tegument through interaction with the large tegument protein/LTP. The sequence is that of Capsid vertex component 2 from Homo sapiens (Human).